The chain runs to 248 residues: Pulmonary surfactant-associated protein A (248 aa).

Positions 1–17 (MWLRCLALALTLLMVSG) are cleaved as a signal peptide. The N-linked (GlcNAc...) asparagine glycan is linked to Asn-20. A Collagen-like domain is found at 28–100 (GNPGIPGTPG…PGERGPPGLP (73 aa)). Residues 29-103 (NPGIPGTPGS…RGPPGLPASL (75 aa)) are disordered. Residues Pro-30, Pro-33, Pro-36, Pro-42, Pro-54, Pro-57, Pro-63, Pro-67, and Pro-70 each carry the 4-hydroxyproline modification. Positions 42-51 (PGRDGRDGVK) are enriched in basic and acidic residues. The segment covering 54-65 (PGPPGPLGPPGG) has biased composition (pro residues). Over residues 84-93 (ERGEKGEPGE) the composition is skewed to basic and acidic residues. The C-type lectin domain occupies 132–248 (LVVGRKVFSS…LQYRLAICEF (117 aa)). Cystine bridges form between Cys-155/Cys-246 and Cys-224/Cys-238. Residue Asn-207 is glycosylated (N-linked (GlcNAc...) asparagine). Positions 215, 217, and 234 each coordinate Ca(2+).

This sequence belongs to the SFTPA family. As to quaternary structure, oligomeric complex of 6 set of homotrimers.

It localises to the secreted. Its subcellular location is the extracellular space. The protein localises to the extracellular matrix. It is found in the surface film. Its function is as follows. In presence of calcium ions, it binds to surfactant phospholipids and contributes to lower the surface tension at the air-liquid interface in the alveoli of the mammalian lung and is essential for normal respiration. Enhances the expression of MYO18A/SP-R210 on alveolar macrophages. The polypeptide is Pulmonary surfactant-associated protein A (SFTPA1) (Canis lupus familiaris (Dog)).